Here is a 165-residue protein sequence, read N- to C-terminus: UPF0303 protein Bcenmc03_1534 (165 aa).

It belongs to the UPF0303 family.

This chain is UPF0303 protein Bcenmc03_1534, found in Burkholderia orbicola (strain MC0-3).